We begin with the raw amino-acid sequence, 143 residues long: Periplasmic nitrate reductase, electron transfer subunit (143 aa).

Positions 1–22 (MKKILTLAAIVLAIGGCSGQQA) are cleaved as a signal peptide. The heme c site is built by histidine 72, cysteine 85, cysteine 88, histidine 89, histidine 106, cysteine 121, cysteine 124, and histidine 125.

This sequence belongs to the NapB family. As to quaternary structure, component of the periplasmic nitrate reductase NapAB complex composed of NapA and NapB. Post-translationally, binds 2 heme C groups per subunit.

It localises to the periplasm. Functionally, electron transfer subunit of the periplasmic nitrate reductase complex NapAB. Receives electrons from the membrane-anchored tetraheme c-type CymA protein and transfers these to NapA subunit, thus allowing electron flow between membrane and periplasm. Not essential for nitrate reduction but confers advantage to the organism when grown on nitrate and thereby a fitness gain in utilizing nitrate. This is Periplasmic nitrate reductase, electron transfer subunit from Shewanella oneidensis (strain ATCC 700550 / JCM 31522 / CIP 106686 / LMG 19005 / NCIMB 14063 / MR-1).